The following is a 166-amino-acid chain: P2Y purinoceptor 2 (166 aa).

At 1-24 the chain is on the cytoplasmic side; that stretch reads VHRCLGVLRPLHSLRWGRARYARR. Residues 25–45 form a helical membrane-spanning segment; sequence VAAVVWVLVLACQAPVLYFVT. Topologically, residues 46–72 are extracellular; it reads TSVRGTRITCHDTSARELFSHFVAYSS. A helical transmembrane segment spans residues 73 to 93; that stretch reads VMLSLLFAVPFSVILVCYVLM. Topologically, residues 94–115 are cytoplasmic; the sequence is ARRLLKPAYGTTGGLPRAKRKS. The helical transmembrane segment at 116–136 threads the bilayer; that stretch reads VRTIALVLAVFTLCFLPFHVT. The Extracellular segment spans residues 137–159; it reads RTLYYSFRSLDLSCHTLNAINMA. The chain crosses the membrane as a helical span at residues 160–166; sequence YKITRPL.

The protein belongs to the G-protein coupled receptor 1 family.

It is found in the cell membrane. Functionally, receptor for ATP and UTP coupled to G-proteins that activate a phosphatidylinositol-calcium second messenger system. The chain is P2Y purinoceptor 2 (P2RY2) from Cricetulus griseus (Chinese hamster).